Reading from the N-terminus, the 356-residue chain is Nicotinate-nucleotide--dimethylbenzimidazole phosphoribosyltransferase (356 aa).

The active-site Proton acceptor is the E317.

Belongs to the CobT family. As to quaternary structure, homodimer.

The catalysed reaction is 5,6-dimethylbenzimidazole + nicotinate beta-D-ribonucleotide = alpha-ribazole 5'-phosphate + nicotinate + H(+). It participates in nucleoside biosynthesis; alpha-ribazole biosynthesis; alpha-ribazole from 5,6-dimethylbenzimidazole: step 1/2. In terms of biological role, catalyzes the synthesis of alpha-ribazole-5'-phosphate from nicotinate mononucleotide (NAMN) and 5,6-dimethylbenzimidazole (DMB). In Salmonella paratyphi A (strain AKU_12601), this protein is Nicotinate-nucleotide--dimethylbenzimidazole phosphoribosyltransferase.